We begin with the raw amino-acid sequence, 417 residues long: MAESWVIMVTAQTPINIAVIKYWGKRDETLILPINDSIRVSLDPDHLCTTTTVSVRPSFEQDRMWLNGKEISLLGGRFQSCLREIRSRARDLEDEKKGIVIKKMDWEKLHFHIASYNNFPTAAGLASSAAGLACFVFALAKLLTLQEDNGQLSAIARRGSGSACRSLYGGFVKWIMGKEENGSDSIAVQLADEKHWDDLVIVIAVVSARQKETSSTTGMQDSCKTSMLIQHRAKEVVPKRILQMEDAIEKRDFPSFARLACADSNQFHAVCLDTSPPIFYINDTSHKIISCVEKWNRSVGTPQVAYTFDAGPNAVLIARDRKIAALLLRRLLFHFPPHSNTDSNSYVIGDKSILQDVGVQDTKDIESLPPPPEIKDNIPAQKSNGDVSYFICTRPGRGPVLLPDSRALLNPETGLPK.

Position 22-25 (22-25 (YWGK)) interacts with (R)-5-diphosphomevalonate. Residues 39-47 (RVSLDPDHL) carry the Peroxisomal targeting signal PTS2 motif. Residues R77, 160-165 (SGSACR), and T216 each bind (R)-5-diphosphomevalonate.

Belongs to the diphosphomevalonate decarboxylase family. Homodimer.

The protein localises to the peroxisome. It catalyses the reaction (R)-5-diphosphomevalonate + ATP = isopentenyl diphosphate + ADP + phosphate + CO2. It functions in the pathway isoprenoid biosynthesis; isopentenyl diphosphate biosynthesis via mevalonate pathway; isopentenyl diphosphate from (R)-mevalonate: step 3/3. In terms of biological role, performs the first committed step in the biosynthesis of isoprene-containing compounds such as sterols and terpenoids. Component of the triterpene saponins (e.g. ginsenosides or panaxosides) and phytosterols biosynthetic pathways. Catalyzes the conversion of mevalonate diphosphate to isopentenyl diphosphate (IPP). This is Diphosphomevalonate decarboxylase 1 from Panax ginseng (Korean ginseng).